The primary structure comprises 272 residues: Ribosomal RNA small subunit methyltransferase A (272 aa).

S-adenosyl-L-methionine is bound by residues asparagine 27, leucine 29, glycine 54, glutamate 75, aspartate 97, and asparagine 117.

It belongs to the class I-like SAM-binding methyltransferase superfamily. rRNA adenine N(6)-methyltransferase family. RsmA subfamily.

Its subcellular location is the cytoplasm. The catalysed reaction is adenosine(1518)/adenosine(1519) in 16S rRNA + 4 S-adenosyl-L-methionine = N(6)-dimethyladenosine(1518)/N(6)-dimethyladenosine(1519) in 16S rRNA + 4 S-adenosyl-L-homocysteine + 4 H(+). Its function is as follows. Specifically dimethylates two adjacent adenosines (A1518 and A1519) in the loop of a conserved hairpin near the 3'-end of 16S rRNA in the 30S particle. May play a critical role in biogenesis of 30S subunits. The sequence is that of Ribosomal RNA small subunit methyltransferase A from Malacoplasma penetrans (strain HF-2) (Mycoplasma penetrans).